Here is a 159-residue protein sequence, read N- to C-terminus: Probable chemoreceptor glutamine deamidase CheD 1 (159 aa).

This sequence belongs to the CheD family.

It catalyses the reaction L-glutaminyl-[protein] + H2O = L-glutamyl-[protein] + NH4(+). Its function is as follows. Probably deamidates glutamine residues to glutamate on methyl-accepting chemotaxis receptors (MCPs), playing an important role in chemotaxis. In Methanosarcina acetivorans (strain ATCC 35395 / DSM 2834 / JCM 12185 / C2A), this protein is Probable chemoreceptor glutamine deamidase CheD 1.